The following is a 268-amino-acid chain: Shikimate dehydrogenase (NADP(+)) (268 aa).

Shikimate is bound by residues 15–17 (SKS) and Thr60. Lys64 serves as the catalytic Proton acceptor. Asn85 and Asp101 together coordinate shikimate. NADP(+) contacts are provided by residues 121 to 125 (GAGGS) and Leu208. Tyr210 is a binding site for shikimate. Residue Gly230 coordinates NADP(+).

It belongs to the shikimate dehydrogenase family. As to quaternary structure, homodimer.

It catalyses the reaction shikimate + NADP(+) = 3-dehydroshikimate + NADPH + H(+). It participates in metabolic intermediate biosynthesis; chorismate biosynthesis; chorismate from D-erythrose 4-phosphate and phosphoenolpyruvate: step 4/7. Involved in the biosynthesis of the chorismate, which leads to the biosynthesis of aromatic amino acids. Catalyzes the reversible NADPH linked reduction of 3-dehydroshikimate (DHSA) to yield shikimate (SA). The sequence is that of Shikimate dehydrogenase (NADP(+)) from Helicobacter hepaticus (strain ATCC 51449 / 3B1).